A 151-amino-acid chain; its full sequence is Ribosome maturation factor RimP (151 aa).

Belongs to the RimP family.

The protein resides in the cytoplasm. Functionally, required for maturation of 30S ribosomal subunits. The protein is Ribosome maturation factor RimP of Vibrio cholerae serotype O1 (strain ATCC 39541 / Classical Ogawa 395 / O395).